Reading from the N-terminus, the 185-residue chain is Peptide deformylase (185 aa).

Residues cysteine 112 and histidine 155 each coordinate Fe cation. Glutamate 156 is a catalytic residue. A Fe cation-binding site is contributed by histidine 159.

This sequence belongs to the polypeptide deformylase family. Fe(2+) is required as a cofactor.

It catalyses the reaction N-terminal N-formyl-L-methionyl-[peptide] + H2O = N-terminal L-methionyl-[peptide] + formate. Its function is as follows. Removes the formyl group from the N-terminal Met of newly synthesized proteins. Requires at least a dipeptide for an efficient rate of reaction. N-terminal L-methionine is a prerequisite for activity but the enzyme has broad specificity at other positions. This Latilactobacillus sakei subsp. sakei (strain 23K) (Lactobacillus sakei subsp. sakei) protein is Peptide deformylase.